A 551-amino-acid chain; its full sequence is Vacuolar protein sorting-associated protein 17 (551 aa).

Positions 1–100 are disordered; that stretch reads MTSAVPYDPY…SERVILPERS (100 aa). 2 stretches are compositionally biased toward polar residues: residues 29 to 39 and 46 to 64; these read AATTTDGSSSM and TEQT…NIQN. The PX domain occupies 108 to 227; that stretch reads LLAKVTGLER…FFIESDFNTY (120 aa). Residues 359–385 adopt a coiled-coil conformation; it reads IMRNLVQAQQNSKAKQEQARRFRSRRD. The tract at residues 474-504 is disordered; sequence RLGRHAVSNNNSDTSQTLKGDSWTGESNRKS. A compositionally biased stretch (polar residues) spans 480–504; the sequence is VSNNNSDTSQTLKGDSWTGESNRKS. Residue Ser-544 is modified to Phosphoserine.

Belongs to the VPS17 family. Component of the retromer complex which consists of VPS29, VPS26, VPS35, VPS5 and VPS17. Component of a retromer subcomplex consisting of VPS5 and VPS17. In terms of processing, phosphorylated on one or more serine residues.

Its subcellular location is the endomembrane system. In terms of biological role, component of the membrane-associated retromer complex which is essential in endosome-to-Golgi retrograde transport. The VPS5-VPS17 subcomplex may assemble onto the membrane to promote vesicle formation and is required for recycling the vacuolar protein-sorting receptor. Required for the sorting and delivery of a subset of soluble vacuolar hydrolases. Required for retention of late Golgi membrane proteins and vacuolar biogenesis. Involved in vacuolar fragmentation during hyperosmotic stress. This is Vacuolar protein sorting-associated protein 17 from Saccharomyces cerevisiae (strain ATCC 204508 / S288c) (Baker's yeast).